Reading from the N-terminus, the 3999-residue chain is Hybrid PKS-NRPS synthetase xenE (3999 aa).

Positions 13–449 constitute a Ketosynthase family 3 (KS3) domain; the sequence is REPIAVVGSG…GTNAHCIIEN (437 aa). Active-site for beta-ketoacyl synthase activity residues include C186, H325, and H369. Positions 562–879 constitute a Malonyl-CoA:ACP transacylase (MAT) domain; sequence VFTGQGAQWP…TGLLNRGKDD (318 aa). Residues 949 to 1084 form an N-terminal hotdog fold region; sequence NPLLGSRTTD…GRVIVITGET (136 aa). The region spanning 949-1253 is the PKS/mFAS DH domain; it reads NPLLGSRTTD…VVAFAEQTED (305 aa). A dehydratase (DH) domain region spans residues 950 to 1252; it reads PLLGSRTTDV…RVVAFAEQTE (303 aa). The Proton acceptor; for dehydratase activity role is filled by H981. The tract at residues 1099-1253 is C-terminal hotdog fold; the sequence is LVDIPEDRFY…VVAFAEQTED (155 aa). The Proton donor; for dehydratase activity role is filled by D1159. Residues 1298 to 1593 are methyltransferase (cMeT) domain; sequence YMKQLVTLFP…FSGADSPMPE (296 aa). The Ketoreductase (KR) domain maps to 2133–2306; the sequence is TYVLFGLTSD…AASILHLGAV (174 aa). Residues 2414–2495 form the Carrier 1 domain; it reads EEILEIVQDA…QLVEYAIGSM (82 aa). O-(pantetheine 4'-phosphoryl)serine is present on S2455. A disordered region spans residues 2501–2573; that stretch reads PNRADSAKAS…EESPSESVND (73 aa). The span at 2526 to 2554 shows a compositional bias: low complexity; sequence SVSSSPSSLPKTSASGSSQQMSEGSSKTS. Positions 2580–3015 are condensation; sequence EKVLPVSPGQ…EEVSLFTEQE (436 aa). Residues 3045–3453 are adenylation; sequence AVHTDKVALK…RIEGDTQIKL (409 aa). Residues 3562–3642 enclose the Carrier 2 domain; it reads RKLTDTESKL…AMAAAIQDTS (81 aa). The residue at position 3602 (S3602) is an O-(pantetheine 4'-phosphoryl)serine. The segment at 3681–3900 is reductase-like (R) domain (R); it reads LTGATGFLGK…IDLITVEKAA (220 aa).

In the C-terminal section; belongs to the NRP synthetase family.

It participates in mycotoxin biosynthesis. Hybrid PKS-NRPS synthetase; part of the gene cluster that mediates the biosynthesis of xenoacremones such as xenoacremone A, a compound that shows inhibitory activity toward the PI3K/AKT signaling pathway and which has the ability to induce apoptosis of A549 lung cancer cells. Within the pathway, cooperation of the hybrid PKS-NRPS xenE and the trans-acting enoyl reductase xenG is responsible for the formation of the reduced tyrosine-nonaketide derivative. The PKS module of xenE acted in combination with the trans-acting enoyl reductase xenG to produce a double-methylated nonaketide attached to the ACP domain. In parallel, the adenylation (A) domain of the NRPS module activated L-tyrosine, which was then transferred to the ACP domain. The condensation (C) domain subsequently linked this group to the polyketide chain, forming an enzyme-bound amide. Reductive release by the C-terminal R domain afforded the aldehyde derivative. The alpha/beta hydrolase xenA then accelerates intramolecular nucleophilic attack to give a pyrrolidone derivative. Subsequently, three enzymes, xenF, xenD, and xenC, coordinately participate in the conversion to xenoacremone B. XenF catalyzes sigmatropic rearrangement to form an A-ring, which leads to an unusual intermediate with a hexane ring, which is required for the formation of the tricarbocyclic product. Epoxidation catalyzed by xenD and the formation of the paracyclophane ether catalyzed by xenC initiate a spontaneous intramolecular Diels-Alder (IMDA) reaction to yield xenoacremone B. Spontaneous hydration of xenoacremone B leads to the formation of xenoacremone A, which undergoes subsequent methylation to afford xenoacremone C. This is Hybrid PKS-NRPS synthetase xenE from Xenoacremonium sinensis (Endophyte fungus).